The following is a 91-amino-acid chain: DNA-binding protein HU (91 aa).

It belongs to the bacterial histone-like protein family.

Its function is as follows. Histone-like DNA-binding protein which is capable of wrapping DNA to stabilize it, and thus to prevent its denaturation under extreme environmental conditions. Also seems to act as a fortuitous virulence factor in delayed sequelae by binding to heparan sulfate-proteoglycans in the extracellular matrix of target organs and acting as a nidus for in situ immune complex formation. The protein is DNA-binding protein HU (hup) of Streptococcus gordonii.